The chain runs to 363 residues: Cytoplasmic tRNA 2-thiolation protein 1 (363 aa).

A disordered region spans residues 340-363; it reads ASLNGTPRTPPTPAEPVEGIERAA.

This sequence belongs to the TtcA family. CTU1/NCS6/ATPBD3 subfamily.

Its subcellular location is the cytoplasm. It functions in the pathway tRNA modification; 5-methoxycarbonylmethyl-2-thiouridine-tRNA biosynthesis. Its function is as follows. Plays a central role in 2-thiolation of mcm(5)S(2)U at tRNA wobble positions of tRNA(Lys), tRNA(Glu) and tRNA(Gln). Directly binds tRNAs and probably acts by catalyzing adenylation of tRNAs, an intermediate required for 2-thiolation. It is unclear whether it acts as a sulfurtransferase that transfers sulfur from thiocarboxylated URM1 onto the uridine of tRNAs at wobble position. Prior mcm(5) tRNA modification by the elongator complex is required for 2-thiolation. May also be involved in protein urmylation. The chain is Cytoplasmic tRNA 2-thiolation protein 1 from Cryptococcus neoformans var. neoformans serotype D (strain B-3501A) (Filobasidiella neoformans).